The primary structure comprises 98 residues: MGHLLGLGAVLFCISLAGIFLNRKNVIVLLMSIELMLLSVNVNFIAFSRELGDTAGQLFVFFILTVAAAEAAIGLAILVTLFRTRRTINVAEVDTLKG.

Transmembrane regions (helical) follow at residues 1–21 (MGHLLGLGAVLFCISLAGIFL), 27–47 (IVLLMSIELMLLSVNVNFIAF), and 59–79 (FVFFILTVAAAEAAIGLAILV).

The protein belongs to the complex I subunit 4L family. In terms of assembly, NDH-1 is composed of 14 different subunits. Subunits NuoA, H, J, K, L, M, N constitute the membrane sector of the complex.

The protein resides in the cell inner membrane. The catalysed reaction is a quinone + NADH + 5 H(+)(in) = a quinol + NAD(+) + 4 H(+)(out). NDH-1 shuttles electrons from NADH, via FMN and iron-sulfur (Fe-S) centers, to quinones in the respiratory chain. The immediate electron acceptor for the enzyme in this species is believed to be ubiquinone. Couples the redox reaction to proton translocation (for every two electrons transferred, four hydrogen ions are translocated across the cytoplasmic membrane), and thus conserves the redox energy in a proton gradient. The polypeptide is NADH-quinone oxidoreductase subunit K (Xanthomonas oryzae pv. oryzae (strain PXO99A)).